Reading from the N-terminus, the 21-residue chain is DYE-linked aldehyde dehydrogenase, gamma chain (21 aa).

Heterotetramer composed of an alpha, a beta and two gamma chains. [2Fe-2S] cluster serves as cofactor.

Its function is as follows. Active with aldehydes and formate esters as substrates. In Amycolatopsis methanolica, this protein is DYE-linked aldehyde dehydrogenase, gamma chain.